Reading from the N-terminus, the 230-residue chain is 7-cyano-7-deazaguanine synthase (230 aa).

Position 9–19 (9–19 (ISGGLDSTTCL)) interacts with ATP. Zn(2+)-binding residues include Cys192, Cys202, Cys205, and Cys208.

The protein belongs to the QueC family. The cofactor is Zn(2+).

The enzyme catalyses 7-carboxy-7-deazaguanine + NH4(+) + ATP = 7-cyano-7-deazaguanine + ADP + phosphate + H2O + H(+). It participates in purine metabolism; 7-cyano-7-deazaguanine biosynthesis. In terms of biological role, catalyzes the ATP-dependent conversion of 7-carboxy-7-deazaguanine (CDG) to 7-cyano-7-deazaguanine (preQ(0)). This is 7-cyano-7-deazaguanine synthase from Myxococcus xanthus (strain DK1622).